A 294-amino-acid chain; its full sequence is 2-dehydropantoate 2-reductase (294 aa).

Residues 10–15, R34, K74, N98, and A122 contribute to the NADP(+) site; that span reads GAGALG. The active-site Proton donor is K178. Residues K178, N182, N186, N196, and 243 to 246 each bind substrate; that span reads NRSS. E258 lines the NADP(+) pocket.

The protein belongs to the ketopantoate reductase family.

It localises to the cytoplasm. It carries out the reaction (R)-pantoate + NAD(+) = 2-dehydropantoate + NADH + H(+). The catalysed reaction is (R)-pantoate + NADP(+) = 2-dehydropantoate + NADPH + H(+). Its pathway is cofactor biosynthesis; coenzyme A biosynthesis. Catalyzes the NAD(P)H-dependent reduction of ketopantoate into pantoic acid. In Archaeoglobus fulgidus (strain ATCC 49558 / DSM 4304 / JCM 9628 / NBRC 100126 / VC-16), this protein is 2-dehydropantoate 2-reductase.